Here is a 192-residue protein sequence, read N- to C-terminus: RNA-free ribonuclease P (192 aa).

Belongs to the HARP family.

The enzyme catalyses Endonucleolytic cleavage of RNA, removing 5'-extranucleotides from tRNA precursor.. In terms of biological role, RNA-free RNase P that catalyzes the removal of the 5'-leader sequence from pre-tRNA to produce the mature 5'-terminus. The sequence is that of RNA-free ribonuclease P from Alkalilimnicola ehrlichii (strain ATCC BAA-1101 / DSM 17681 / MLHE-1).